We begin with the raw amino-acid sequence, 109 residues long: Tetraspanin-31 (109 aa).

Residues 1–12 (MVCGGFACSKNA) lie on the Cytoplasmic side of the membrane. The chain crosses the membrane as a helical span at residues 13-33 (LCALNVVYMLVGLLLIGVAAW). Residues 34-44 (AKGLGLVSSIH) are Extracellular-facing. Residues 45–65 (IIGGVIAVGVFLLLIAVAGLV) traverse the membrane as a helical segment. Over 66-72 (GAVNHHQ) the chain is Cytoplasmic. A helical transmembrane segment spans residues 73–93 (VLLFFYMIILGLVFIFQFGIS). Topologically, residues 94 to 109 (CSCLAINLSKQAGIIN) are extracellular. The N-linked (GlcNAc...) asparagine glycan is linked to N100.

This sequence belongs to the tetraspanin (TM4SF) family.

It is found in the membrane. This chain is Tetraspanin-31 (TSPAN31), found in Sus scrofa (Pig).